The following is a 315-amino-acid chain: Carbamate kinase (315 aa).

The protein belongs to the carbamate kinase family. Homodimer.

It localises to the cytoplasm. The enzyme catalyses hydrogencarbonate + NH4(+) + ATP = carbamoyl phosphate + ADP + H2O + H(+). The chain is Carbamate kinase (cpkA) from Thermococcus kodakarensis (strain ATCC BAA-918 / JCM 12380 / KOD1) (Pyrococcus kodakaraensis (strain KOD1)).